A 1097-amino-acid chain; its full sequence is FHIP family protein GK23746 (1097 aa).

The segment covering methionine 1–asparagine 21 has biased composition (polar residues). The disordered stretch occupies residues methionine 1–proline 25. Phosphoserine is present on serine 491. Disordered regions lie at residues aspartate 639–arginine 684, asparagine 820–tyrosine 856, and asparagine 932–valine 1042. Residues serine 641–glycine 654 are compositionally biased toward low complexity. Serine 823 bears the Phosphoserine mark. Low complexity-rich tracts occupy residues proline 824–glutamine 852 and asparagine 932–serine 948. The span at alanine 949 to histidine 962 shows a compositional bias: polar residues. The span at threonine 973–threonine 985 shows a compositional bias: low complexity. Positions alanine 986–glycine 995 are enriched in gly residues. Composition is skewed to low complexity over residues serine 996–threonine 1006 and serine 1013–threonine 1022.

The protein belongs to the FHIP family.

The chain is FHIP family protein GK23746 from Drosophila willistoni (Fruit fly).